The sequence spans 279 residues: Phosphonates import ATP-binding protein PhnC 2 (279 aa).

Residues 10–253 form the ABC transporter domain; the sequence is LSLKGVSVRY…VARNLYAKQS (244 aa). Residue 43–50 participates in ATP binding; it reads GASGAGKS. The span at 253–262 shows a compositional bias: low complexity; sequence SNASNTSAST. Residues 253 to 279 form a disordered region; the sequence is SNASNTSASTDSPRTLQSSQTKELLPC. Over residues 263–279 the composition is skewed to polar residues; sequence DSPRTLQSSQTKELLPC.

Belongs to the ABC transporter superfamily. Phosphonates importer (TC 3.A.1.9.1) family. In terms of assembly, the complex is composed of two ATP-binding proteins (PhnC), two transmembrane proteins (PhnE) and a solute-binding protein (PhnD).

Its subcellular location is the cell inner membrane. The catalysed reaction is phosphonate(out) + ATP + H2O = phosphonate(in) + ADP + phosphate + H(+). Its function is as follows. Part of the ABC transporter complex PhnCDE involved in phosphonates import. Responsible for energy coupling to the transport system. The protein is Phosphonates import ATP-binding protein PhnC 2 of Cupriavidus metallidurans (strain ATCC 43123 / DSM 2839 / NBRC 102507 / CH34) (Ralstonia metallidurans).